The following is a 660-amino-acid chain: Nuclear factor erythroid 2-related factor 3 (660 aa).

The interval 120–214 (SAVGDGGQSA…KTEEHKMACA (95 aa)) is disordered. Positions 123-135 (GDGGQSASAGGGD) are enriched in gly residues. Composition is skewed to basic and acidic residues over residues 173–186 (MLREKSEAVDHSSQ) and 204–214 (SKTEEHKMACA). The bZIP domain occupies 541–604 (LIRDIRRRGK…DIMRQKLHGL (64 aa)). Positions 543 to 562 (RDIRRRGKNKVAAQNCRKRK) are basic motif. Residues 566–573 (ILNLEDDI) form a leucine-zipper region.

This sequence belongs to the bZIP family. CNC subfamily. Heterodimer with MAFG, MAFK and other small MAF proteins that binds to the MAF recognition elements (MARE). High level expression in brain, thymus, testis and placenta. Medium level expression in uterus, stomach and lung. Low level expression in kidney. No expression in heart, liver, spleen and ovary.

It localises to the nucleus. Its function is as follows. Activates erythroid-specific, globin gene expression. The polypeptide is Nuclear factor erythroid 2-related factor 3 (Nfe2l3) (Mus musculus (Mouse)).